Consider the following 207-residue polypeptide: Large ribosomal subunit protein uL4 (207 aa).

The segment at 53-76 (TVSEVSGTTKKPFKQKGTGNARQG) is disordered.

The protein belongs to the universal ribosomal protein uL4 family. As to quaternary structure, part of the 50S ribosomal subunit.

Functionally, one of the primary rRNA binding proteins, this protein initially binds near the 5'-end of the 23S rRNA. It is important during the early stages of 50S assembly. It makes multiple contacts with different domains of the 23S rRNA in the assembled 50S subunit and ribosome. Its function is as follows. Forms part of the polypeptide exit tunnel. In Rickettsia bellii (strain OSU 85-389), this protein is Large ribosomal subunit protein uL4.